The chain runs to 433 residues: Tol-Pal system protein TolB (433 aa).

An N-terminal signal peptide occupies residues 1-26 (MSLMTKLGFRALVASCLIAAGGAAHA).

It belongs to the TolB family. The Tol-Pal system is composed of five core proteins: the inner membrane proteins TolA, TolQ and TolR, the periplasmic protein TolB and the outer membrane protein Pal. They form a network linking the inner and outer membranes and the peptidoglycan layer.

The protein localises to the periplasm. Its function is as follows. Part of the Tol-Pal system, which plays a role in outer membrane invagination during cell division and is important for maintaining outer membrane integrity. The protein is Tol-Pal system protein TolB of Burkholderia pseudomallei (strain 1710b).